The primary structure comprises 270 residues: Replication protein A 32 kDa subunit (270 aa).

Position 1 is an N-acetylmethionine (M1). 2 positions are modified to phosphoserine; by PRKDC: S4 and S8. Residue T21 is modified to Phosphothreonine; by PRKDC. Residues 21 to 40 are disordered; the sequence is TQSPGGFGSPAPSQAEKKSR. S23 bears the Phosphoserine; by CDK2 mark. The residue at position 29 (S29) is a Phosphoserine; by CDK1. At S33 the chain carries Phosphoserine; by PRKDC. Residues K37 and K38 each participate in a glycyl lysine isopeptide (Lys-Gly) (interchain with G-Cter in ubiquitin) cross-link. The segment at residues 74 to 148 is a DNA-binding region (OB); the sequence is VTIVGIIRHA…KSLVAFKIMP (75 aa). The interaction with RAD52, TIPIN, UNG and XPA stretch occupies residues 187–270; sequence GMSEAGNFGG…DDHFKSTDAE (84 aa).

It belongs to the replication factor A protein 2 family. Component of the replication protein A complex (RPA/RP-A), a heterotrimeric complex composed of RPA1, RPA2 and RPA3. Interacts with PRPF19; the PRP19-CDC5L complex is recruited to the sites of DNA repair where it ubiquitinates the replication protein A complex (RPA). Interacts with SERTAD3. Interacts with TIPIN. Interacts with TIMELESS. Interacts with PPP4R2; the interaction is direct, DNA damage-dependent and mediates the recruitment of the PP4 catalytic subunit PPP4C. Interacts (hyperphosphorylated) with RAD51. Interacts with SMARCAL1; the interaction is direct and mediates the recruitment to the RPA complex of SMARCAL1. Interacts with RAD52 and XPA; those interactions are direct and associate RAD52 and XPA to the RPA complex. Interacts with FBH1. Interacts with ETAA1; the interaction is direct and promotes ETAA1 recruitment at stalled replication forks. Interacts with DDI2. Interacts (in unphosphorylated form via N-terminus) with EIF4EBP3; the interaction enhances EIF4EBP3-mediated inhibition of EIF4E-mediated mRNA nuclear export. Differentially phosphorylated throughout the cell cycle, becoming phosphorylated at the G1-S transition and dephosphorylated in late mitosis. Mainly phosphorylated at Ser-23 and Ser-29, by cyclin A-CDK2 and cyclin B-CDK1, respectively during DNA replication and mitosis. Dephosphorylation may require the serine/threonine-protein phosphatase 4. Phosphorylation at Ser-23 and Ser-29 is a prerequisite for further phosphorylation. Becomes hyperphosphorylated on additional residues including Ser-4, Ser-8, Thr-21 and Ser-33 in response to DNA damage. Hyperphosphorylation is mediated by ATM, ATR and PRKDC. Primarily recruited to DNA repair nuclear foci as a hypophosphorylated form it undergoes subsequent hyperphosphorylation, catalyzed by ATR. Hyperphosphorylation is required for RAD51 recruitment to chromatin and efficient DNA repair. Phosphorylation at Thr-21 depends upon RFWD3 presence. In terms of processing, DNA damage-induced 'Lys-63'-linked polyubiquitination by PRPF19 mediates ATRIP recruitment to the RPA complex at sites of DNA damage and activation of ATR. Ubiquitinated by RFWD3 at stalled replication forks in response to DNA damage: ubiquitination by RFWD3 does not lead to degradation by the proteasome and promotes removal of the RPA complex from stalled replication forks, promoting homologous recombination.

It localises to the nucleus. The protein resides in the PML body. In terms of biological role, as part of the heterotrimeric replication protein A complex (RPA/RP-A), binds and stabilizes single-stranded DNA intermediates, that form during DNA replication or upon DNA stress. It prevents their reannealing and in parallel, recruits and activates different proteins and complexes involved in DNA metabolism. Thereby, it plays an essential role both in DNA replication and the cellular response to DNA damage. In the cellular response to DNA damage, the RPA complex controls DNA repair and DNA damage checkpoint activation. Through recruitment of ATRIP activates the ATR kinase a master regulator of the DNA damage response. It is required for the recruitment of the DNA double-strand break repair factors RAD51 and RAD52 to chromatin in response to DNA damage. Also recruits to sites of DNA damage proteins like XPA and XPG that are involved in nucleotide excision repair and is required for this mechanism of DNA repair. Also plays a role in base excision repair (BER) probably through interaction with UNG. Also recruits SMARCAL1/HARP, which is involved in replication fork restart, to sites of DNA damage. May also play a role in telomere maintenance. The sequence is that of Replication protein A 32 kDa subunit (RPA2) from Pongo abelii (Sumatran orangutan).